We begin with the raw amino-acid sequence, 666 residues long: Calmodulin-binding receptor kinase CaMRLK (666 aa).

Positions 1–17 are cleaved as a signal peptide; sequence MFLKLFLLLSLVSFSHS. Residues 18–297 are Extracellular-facing; it reads DSSSTVSCPN…KTHRTNHTPL (280 aa). N-linked (GlcNAc...) asparagine glycosylation is found at N27, N45, N52, N68, N78, N89, N110, N126, N137, N148, N154, N189, N212, N229, and N261. LRR repeat units follow at residues 79–103, 105–127, 130–152, 153–177, 178–197, 198–224, and 226–246; these read LTRL…LWSM, GLVS…PVNG, LSAV…FTGF, TNLT…SLSG, LRHL…PISG, LKSL…NLNH, and QFLN…KYRK. A helical membrane pass occupies residues 298-318; the sequence is VIGLSSSLGALIIVIFAAAII. The segment at 319 to 337 is calmodulin binding; it reads LIRRRMKSARTKSRWAISN. At 319 to 666 the chain is on the cytoplasmic side; the sequence is LIRRRMKSAR…LLKDIRTVSR (348 aa). The 267-residue stretch at 395–661 folds into the Protein kinase domain; sequence FGTESVISDG…QQVLGLLKDI (267 aa). ATP is bound by residues 401–409 and K423; that span reads ISDGTCGPL.

The protein belongs to the protein kinase superfamily. Ser/Thr protein kinase family. As to quaternary structure, binds calmodulin (CaM) in a calcium-dependent manner. Interacts with CAM1, but not with CAM8. Requires Mn(2+) as cofactor. Mg(2+) is required as a cofactor. In terms of processing, calmodulin (CaM)-independent autophosphorylation. In terms of tissue distribution, expressed in reproductive and vegetative tissues, with higher levels in seedlings and flowers, but not in leaves.

The protein resides in the cell membrane. The catalysed reaction is L-seryl-[protein] + ATP = O-phospho-L-seryl-[protein] + ADP + H(+). It carries out the reaction L-threonyl-[protein] + ATP = O-phospho-L-threonyl-[protein] + ADP + H(+). Its activity is regulated as follows. Not stimulated by calmodulin (CaM). Functionally, can phosphorylate the myelin basic protein in vitro. Required for endosperm development in embryos. Maybe involved in auxin and osmotic stress responses. This is Calmodulin-binding receptor kinase CaMRLK from Arabidopsis thaliana (Mouse-ear cress).